A 463-amino-acid chain; its full sequence is T-box transcription factor TBX1-B (463 aa).

2 disordered regions span residues 39 to 58 and 75 to 102; these read SPSPGDPYSQHEPHYEPCSA and GASSSSCASSTPGSGSTGSSSGNKAPVK. Low complexity predominate over residues 75 to 96; the sequence is GASSSSCASSTPGSGSTGSSSG. Residues 119 to 297 constitute a DNA-binding region (T-box); the sequence is LWDEFNQLGT…SNPFAKGFRD (179 aa). 2 disordered regions span residues 320 to 343 and 367 to 406; these read RSRNPVSSPPQNGSDKDGDGRREY and SPSLPVPGGLVPLSTGRPSPPHELRLDPHSQGSEPLHHHP. Over residues 323–332 the composition is skewed to polar residues; it reads NPVSSPPQNG. The segment covering 333-343 has biased composition (basic and acidic residues); that stretch reads SDKDGDGRREY. Residues 367 to 380 are compositionally biased toward low complexity; it reads SPSLPVPGGLVPLS. The Nuclear localization signal signature appears at 420–431; that stretch reads KTRPAPYPLPSI.

In terms of assembly, binds DNA as a dimer. Interacts with dscr6/ripply3.

Its subcellular location is the nucleus. Functionally, probable transcriptional regulator involved in developmental processes. Binds to the palindromic T site 5'-TTCACACCTAGGTGTGAA-3' DNA sequence. Induces pre-placodal ectoderm (PPE) gene expression in regions where RIPPLY3 is absent. Plays a role in the formation of the anteroposterior (AP) axis during embryonic development; required to establish the posterolateral border of the pre-placodal ectoderm (PPE) acting downstream of the retinoic acid receptor (RAR) signaling. Its function is as follows. Probable transcriptional regulator involved in developmental processes. Binds to the palindromic T site 5'-TTCACACCTAGGTGTGAA-3' DNA sequence. Is required for normal development of the pharyngeal arch arteries. The polypeptide is T-box transcription factor TBX1-B (tbx1-b) (Xenopus laevis (African clawed frog)).